Here is a 451-residue protein sequence, read N- to C-terminus: AP-4 complex subunit mu (451 aa).

In terms of domain architecture, MHD spans 184–450; it reads REEIFVDIIE…VTQANSYVAR (267 aa).

The protein belongs to the adaptor complexes medium subunit family. As to quaternary structure, adaptor protein complex 4 (AP-4) is a heterotetramer composed of two large adaptins (epsilon-type subunit and beta-type subunit), a medium adaptin (mu-type subunit) and a small adaptin (sigma-type subunit).

It is found in the golgi apparatus. The protein resides in the trans-Golgi network. The protein localises to the membrane. It localises to the coated pit. In terms of biological role, subunit of novel type of clathrin- or non-clathrin-associated protein coat involved in targeting proteins from the trans-Golgi network (TGN) to the endosomal-lysosomal system. This chain is AP-4 complex subunit mu (AP4M), found in Arabidopsis thaliana (Mouse-ear cress).